A 467-amino-acid chain; its full sequence is Na(+)-translocating NADH-quinone reductase subunit A (467 aa).

The protein belongs to the NqrA family. Composed of six subunits; NqrA, NqrB, NqrC, NqrD, NqrE and NqrF.

It catalyses the reaction a ubiquinone + n Na(+)(in) + NADH + H(+) = a ubiquinol + n Na(+)(out) + NAD(+). Its function is as follows. NQR complex catalyzes the reduction of ubiquinone-1 to ubiquinol by two successive reactions, coupled with the transport of Na(+) ions from the cytoplasm to the periplasm. NqrA to NqrE are probably involved in the second step, the conversion of ubisemiquinone to ubiquinol. The chain is Na(+)-translocating NADH-quinone reductase subunit A from Chlamydia pneumoniae (Chlamydophila pneumoniae).